Consider the following 832-residue polypeptide: tRNA ligase (832 aa).

Lysine 108 acts as the N6-AMP-lysine intermediate in catalysis.

Belongs to the TRL1 family.

The enzyme catalyses ATP + (ribonucleotide)n-3'-hydroxyl + 5'-phospho-(ribonucleotide)m = (ribonucleotide)n+m + AMP + diphosphate.. Functionally, one of the two proteins required for the splicing of precursor tRNA molecules containing introns. The ligation activity requires three enzymatic activities: phosphorylation of the 5' terminus of the 3' half-tRNA in the presence of ATP, opening of the 2'3'-cyclic phosphodiester bond of the 5' half-tRNA leaving a 2'-phosphomonoester and ligation of the two tRNA halves in an ATP-dependent reaction. The protein is tRNA ligase (LIG1) of Candida albicans (strain SC5314 / ATCC MYA-2876) (Yeast).